The following is a 462-amino-acid chain: Probable alcohol acetyltransferase crmB (462 aa).

This sequence belongs to the alcohol acetyltransferase FCK4 family.

It participates in secondary metabolite biosynthesis. In terms of biological role, probable alcohol acetyltransferase; part of the crm gene cluster that mediates the biosynthesis of a yet unidentified copper-responsive metabolite. In contrast to crmA, is not involved in the biosynthesis of fumivalines or fumicicolins. The polypeptide is Probable alcohol acetyltransferase crmB (Aspergillus fumigatus (strain ATCC MYA-4609 / CBS 101355 / FGSC A1100 / Af293) (Neosartorya fumigata)).